We begin with the raw amino-acid sequence, 175 residues long: Movement protein (175 aa).

The segment at 30-47 is homodimerization; it reads ADLDDDEEVTTGQEELFL. Residues 50 to 156 form an RNA-binding region; that stretch reads EQAQARHLFS…QRLTSMERNG (107 aa). 2 disordered regions span residues 58 to 89 and 103 to 175; these read FSRK…MEYS and SSSP…VLHR. Basic and acidic residues predominate over residues 63-74; that stretch reads ISREVPADESRS. Residues Ser64 and Ser133 each carry the phosphoserine modification. 2 stretches are compositionally biased toward polar residues: residues 115 to 141 and 148 to 169; these read PSLT…SQSP and RLTS…SSTK.

It belongs to the polerovirus movement protein family. In terms of assembly, homodimer. Post-translationally, phosphorylated.

The protein resides in the host cell junction. It is found in the host plasmodesma. It localises to the host Golgi apparatus. Together with movement protein P3a, facilitates long-distance movement of virions in host. Transports viral genome to neighboring plant cells directly through plasmosdesmata, without any budding. The movement protein allows efficient cell to cell propagation, by bypassing the host cell wall barrier. Binds ssRNA. In Beta vulgaris (Sugar beet), this protein is Movement protein.